The sequence spans 70 residues: Large ribosomal subunit protein bL31 (70 aa).

C16, C18, C37, and C40 together coordinate Zn(2+).

Belongs to the bacterial ribosomal protein bL31 family. Type A subfamily. In terms of assembly, part of the 50S ribosomal subunit. It depends on Zn(2+) as a cofactor.

Functionally, binds the 23S rRNA. The protein is Large ribosomal subunit protein bL31 of Ectopseudomonas mendocina (strain ymp) (Pseudomonas mendocina).